The sequence spans 443 residues: Methionine aminopeptidase 2-1 (443 aa).

A disordered region spans residues 1–90; sequence MAAQADDELN…RVPVSELFPN (90 aa). Over residues 33–48 the composition is skewed to acidic residues; sequence ADNDDSEDDEKEEEGG. A compositionally biased stretch (basic residues) spans 58 to 73; sequence KKKKKRKPKKKKKGGA. H196 serves as a coordination point for substrate. The a divalent metal cation site is built by D216, D227, and H296. H304 lines the substrate pocket. Residues E329 and E424 each coordinate a divalent metal cation.

Belongs to the peptidase M24A family. Methionine aminopeptidase eukaryotic type 2 subfamily. Co(2+) is required as a cofactor. The cofactor is Zn(2+). Mn(2+) serves as cofactor. It depends on Fe(2+) as a cofactor.

It localises to the cytoplasm. It carries out the reaction Release of N-terminal amino acids, preferentially methionine, from peptides and arylamides.. Cotranslationally removes the N-terminal methionine from nascent proteins. The N-terminal methionine is often cleaved when the second residue in the primary sequence is small and uncharged (Met-Ala-, Cys, Gly, Pro, Ser, Thr, or Val). The polypeptide is Methionine aminopeptidase 2-1 (Talaromyces stipitatus (strain ATCC 10500 / CBS 375.48 / QM 6759 / NRRL 1006) (Penicillium stipitatum)).